The chain runs to 441 residues: G-protein coupled receptor family C group 5 member C (441 aa).

An N-terminal signal peptide occupies residues 1 to 22; the sequence is MATHKTLLMCLGLPLFFPGALA. The Extracellular segment spans residues 23–49; sequence QNHAPPGCSPDLDPLYYNLCDRSGAWG. The chain crosses the membrane as a helical span at residues 50–70; the sequence is IVLEAVAGAGIITTFVLTIIL. At 71 to 84 the chain is on the cytoplasmic side; it reads VASLPFVQDTKKRS. A helical transmembrane segment spans residues 85-105; that stretch reads LLGTQVFFLLGTLGLFCLVFA. Topologically, residues 106-119 are extracellular; the sequence is CVVKPDFSTCASRR. A helical transmembrane segment spans residues 120–140; the sequence is FLFGVLFAICFSCLIAHTLSL. Topologically, residues 141-154 are cytoplasmic; the sequence is NFLARKNHGPRGWV. The helical transmembrane segment at 155-175 threads the bilayer; sequence IFTVALLLTLVEVIINTEWLI. Residues 176–207 lie on the Extracellular side of the membrane; it reads ITLVRGGGQVSTPGNGSADWTVTSPCAIANMD. N190 carries N-linked (GlcNAc...) asparagine glycosylation. A helical transmembrane segment spans residues 208–228; sequence FVMALIYVMLLLLAAFLGAWP. The Cytoplasmic segment spans residues 229–240; sequence TLCGRFKRWRKH. The helical transmembrane segment at 241 to 261 threads the bilayer; sequence GVFVLLTTATSIAIWVVWIVM. At 262–278 the chain is on the extracellular side; it reads YTYGNKQHHSPTWDDPT. Residues 279–299 traverse the membrane as a helical segment; sequence LAIALAANAWTFVFFYVIPEV. At 300-441 the chain is on the cytoplasmic side; the sequence is SQVTKPSPEQ…DQSPKNKTRW (142 aa). Phosphoserine is present on residues S343, S382, S402, and S405. The residue at position 413 (Y413) is a Phosphotyrosine. Residues 419-441 are disordered; it reads QVATPTKDGKISQDQSPKNKTRW. Position 422 is a phosphothreonine (T422). Residues 430 to 441 are compositionally biased toward polar residues; it reads SQDQSPKNKTRW. A Phosphoserine modification is found at S434.

The protein belongs to the G-protein coupled receptor 3 family.

The protein resides in the cell membrane. This retinoic acid-inducible G-protein coupled receptor provide evidence for a possible interaction between retinoid and G-protein signaling pathways. The polypeptide is G-protein coupled receptor family C group 5 member C (Gprc5c) (Rattus norvegicus (Rat)).